The following is a 303-amino-acid chain: Probable cell division protein WhiA (303 aa).

Residues 272–303 (SIQQIADSLAVPLTKSGVNHRLRKINKIAEDL) constitute a DNA-binding region (H-T-H motif).

It belongs to the WhiA family.

Involved in cell division and chromosome segregation. The chain is Probable cell division protein WhiA from Streptococcus mutans serotype c (strain ATCC 700610 / UA159).